The sequence spans 245 residues: Small ribosomal subunit protein uS3 (245 aa).

The KH type-2 domain maps to isoleucine 38–lysine 106. Residues tyrosine 225–glutamate 245 are disordered. Positions valine 233 to glutamate 245 are enriched in basic residues.

This sequence belongs to the universal ribosomal protein uS3 family. In terms of assembly, part of the 30S ribosomal subunit. Forms a tight complex with proteins S10 and S14.

Functionally, binds the lower part of the 30S subunit head. Binds mRNA in the 70S ribosome, positioning it for translation. This chain is Small ribosomal subunit protein uS3, found in Azobacteroides pseudotrichonymphae genomovar. CFP2.